A 196-amino-acid chain; its full sequence is Transcriptional regulatory protein UhpA (196 aa).

Positions 3 to 116 (TVALIDDHLI…ELIAAVHTVA (114 aa)) constitute a Response regulatory domain. Aspartate 54 carries the 4-aspartylphosphate modification. The region spanning 131 to 196 (ASGRQDPLTK…ELARRMFDGW (66 aa)) is the HTH luxR-type domain. Residues 155–174 (VKEIAAELGLSPKTVHVHRA) constitute a DNA-binding region (H-T-H motif).

Phosphorylated and dephosphorylated by UhpB.

It localises to the cytoplasm. Its activity is regulated as follows. Phosphorylation by UhpB enhances DNA binding activity. Functionally, part of the UhpABC signaling cascade that controls the expression of the hexose phosphate transporter UhpT. Activates the transcription of the uhpT gene. Acts by binding specifically to the uhpT promoter region. This Escherichia coli (strain K12) protein is Transcriptional regulatory protein UhpA (uhpA).